The following is a 231-amino-acid chain: Cytochrome c oxidase subunit 2 (231 aa).

Topologically, residues 1–14 are mitochondrial intermembrane; sequence MAHPVHVGLKEATS. Residues 15-45 form a helical membrane-spanning segment; it reads PFMEELIAFHDHTLMIIFLISSLVLYIISMM. Residues 46-59 lie on the Mitochondrial matrix side of the membrane; sequence LTTKLTHTSTMNAQ. A helical transmembrane segment spans residues 60–87; the sequence is EIEIIWTILPAIILIMIALPSLRILYMT. The Mitochondrial intermembrane portion of the chain corresponds to 88–231; sequence DEFNKPYLTL…WASYLYIVSL (144 aa). H161, C196, E198, C200, H204, and M207 together coordinate Cu cation. E198 serves as a coordination point for Mg(2+).

This sequence belongs to the cytochrome c oxidase subunit 2 family. Component of the cytochrome c oxidase (complex IV, CIV), a multisubunit enzyme composed of 14 subunits. The complex is composed of a catalytic core of 3 subunits MT-CO1, MT-CO2 and MT-CO3, encoded in the mitochondrial DNA, and 11 supernumerary subunits COX4I, COX5A, COX5B, COX6A, COX6B, COX6C, COX7A, COX7B, COX7C, COX8 and NDUFA4, which are encoded in the nuclear genome. The complex exists as a monomer or a dimer and forms supercomplexes (SCs) in the inner mitochondrial membrane with NADH-ubiquinone oxidoreductase (complex I, CI) and ubiquinol-cytochrome c oxidoreductase (cytochrome b-c1 complex, complex III, CIII), resulting in different assemblies (supercomplex SCI(1)III(2)IV(1) and megacomplex MCI(2)III(2)IV(2)). Found in a complex with TMEM177, COA6, COX18, COX20, SCO1 and SCO2. Interacts with TMEM177 in a COX20-dependent manner. Interacts with COX20. Interacts with COX16. Cu cation is required as a cofactor.

It localises to the mitochondrion inner membrane. It carries out the reaction 4 Fe(II)-[cytochrome c] + O2 + 8 H(+)(in) = 4 Fe(III)-[cytochrome c] + 2 H2O + 4 H(+)(out). Functionally, component of the cytochrome c oxidase, the last enzyme in the mitochondrial electron transport chain which drives oxidative phosphorylation. The respiratory chain contains 3 multisubunit complexes succinate dehydrogenase (complex II, CII), ubiquinol-cytochrome c oxidoreductase (cytochrome b-c1 complex, complex III, CIII) and cytochrome c oxidase (complex IV, CIV), that cooperate to transfer electrons derived from NADH and succinate to molecular oxygen, creating an electrochemical gradient over the inner membrane that drives transmembrane transport and the ATP synthase. Cytochrome c oxidase is the component of the respiratory chain that catalyzes the reduction of oxygen to water. Electrons originating from reduced cytochrome c in the intermembrane space (IMS) are transferred via the dinuclear copper A center (CU(A)) of subunit 2 and heme A of subunit 1 to the active site in subunit 1, a binuclear center (BNC) formed by heme A3 and copper B (CU(B)). The BNC reduces molecular oxygen to 2 water molecules using 4 electrons from cytochrome c in the IMS and 4 protons from the mitochondrial matrix. The protein is Cytochrome c oxidase subunit 2 (MT-CO2) of Brachyteles hypoxanthus (Northern muriqui).